The following is a 345-amino-acid chain: Ribonucleoside-diphosphate reductase subunit beta (345 aa).

Positions 88, 118, and 121 each coordinate Fe cation. The active site involves Tyr125. Residues Glu185, Glu219, and His222 each contribute to the Fe cation site.

It belongs to the ribonucleoside diphosphate reductase small chain family. As to quaternary structure, tetramer of two alpha and two beta subunits. Fe cation is required as a cofactor.

The enzyme catalyses a 2'-deoxyribonucleoside 5'-diphosphate + [thioredoxin]-disulfide + H2O = a ribonucleoside 5'-diphosphate + [thioredoxin]-dithiol. Provides the precursors necessary for DNA synthesis. Catalyzes the biosynthesis of deoxyribonucleotides from the corresponding ribonucleotides. This Halalkalibacterium halodurans (strain ATCC BAA-125 / DSM 18197 / FERM 7344 / JCM 9153 / C-125) (Bacillus halodurans) protein is Ribonucleoside-diphosphate reductase subunit beta (nrdB).